The chain runs to 279 residues: Replication protein A 32 kDa subunit A (279 aa).

The disordered stretch occupies residues 1 to 39 (MMSFSQPDAFSPSQFTSSQNAAADSTTPSKSRGASSTMP). The OB DNA-binding region spans 71–145 (VRLVGLVSGK…RATAFAIRPV (75 aa)). A disordered region spans residues 181 to 210 (GSSSSNGFSEMTTPTSVKSNPAPVLSVTNG). Residues 190–199 (EMTTPTSVKS) are compositionally biased toward polar residues.

It belongs to the replication factor A protein 2 family. As to quaternary structure, heterotrimer of RPA1, RPA2 and RPA3 (canonical replication protein A complex). Interacts with RPA1A, RPA1B and RPA3. In terms of processing, phosphorylated in a cell-cycle-dependent manner (from the S phase until mitosis). In response to DNA damage, recruited to DNA-repair nuclear foci, as a hypophosphorylated form. In terms of tissue distribution, expressed in root tips, roots, shoot apical meristem (SAM), young leaves, flag leaves and ears, and at lower levels in mature leaves.

Its subcellular location is the nucleus. Functionally, component of the replication protein A complex (RPA) required for DNA recombination, repair and replication. The activity of RPA is mediated by single-stranded DNA binding and protein interactions. The polypeptide is Replication protein A 32 kDa subunit A (RPA2A) (Oryza sativa subsp. japonica (Rice)).